Consider the following 207-residue polypeptide: Large ribosomal subunit protein uL4 (207 aa).

The disordered stretch occupies residues 49 to 78 (HAVKNRSAVSGGGRKPWRQKGTGRARQGSI).

It belongs to the universal ribosomal protein uL4 family. In terms of assembly, part of the 50S ribosomal subunit.

Its function is as follows. One of the primary rRNA binding proteins, this protein initially binds near the 5'-end of the 23S rRNA. It is important during the early stages of 50S assembly. It makes multiple contacts with different domains of the 23S rRNA in the assembled 50S subunit and ribosome. Functionally, forms part of the polypeptide exit tunnel. This chain is Large ribosomal subunit protein uL4, found in Streptococcus pneumoniae serotype 19F (strain G54).